The following is a 493-amino-acid chain: MILVDKFVTHVISESSFEEMDRIYLTNRVLARVGEGVLEVETNLDKLIDLKDQLVEEAVRLETIEDSQTAREILGTELMDLVTPCPSQVNRDFWEAYAYSPEQAIEDFYQLSQKNDYIKLKAIAKNIAYRVPSDYGELEITINLSKPEKDPKEIAAAKLVQASNYPQCQLCLENEGYHGRVNHPARTNHRIIRFEMVGQEWGFQYSPYAYFNEHCIFLDGQHRPMAISRQSFERLLAIVEQFPGYFAGSNADLPIVGGSILTHDHYQGGRHVFPMELAPLQKTFRFAGFEQVKAGIIKWPMSVLRLTSDSKEDLINLADKIFQEWRQYSDSSVQILAETDGTPHHTITPIARKRDGQFELDLVLRDNQTSAEHPDGIYHPHKDVQHIKKENIGLIEVMGLAILPPRLKEEVEQVASYLVGEAVTVADYHQEWADQLKSQHPDLTDKEKALAIVKDSVGAIFVRVLEDAGVYKQTEQGQAAFMRFVEQVGISLD.

The protein belongs to the galactose-1-phosphate uridylyltransferase type 2 family.

It localises to the cytoplasm. It carries out the reaction alpha-D-galactose 1-phosphate + UDP-alpha-D-glucose = alpha-D-glucose 1-phosphate + UDP-alpha-D-galactose. The protein operates within carbohydrate metabolism; galactose metabolism. This chain is Galactose-1-phosphate uridylyltransferase, found in Streptococcus pneumoniae (strain Hungary19A-6).